The chain runs to 340 residues: Glyceraldehyde-3-phosphate dehydrogenase, cytosolic (340 aa).

Residues 16 to 17, D38, and R85 contribute to the NAD(+) site; that span reads RI. D-glyceraldehyde 3-phosphate contacts are provided by residues 156-158, T187, 216-217, and R239; these read SCT and TG. The active-site Nucleophile is the C157. NAD(+) is bound at residue N321.

The protein belongs to the glyceraldehyde-3-phosphate dehydrogenase family. Homotetramer.

Its subcellular location is the cytoplasm. It catalyses the reaction D-glyceraldehyde 3-phosphate + phosphate + NAD(+) = (2R)-3-phospho-glyceroyl phosphate + NADH + H(+). It functions in the pathway carbohydrate degradation; glycolysis; pyruvate from D-glyceraldehyde 3-phosphate: step 1/5. Its function is as follows. Key enzyme in glycolysis that catalyzes the first step of the pathway by converting D-glyceraldehyde 3-phosphate (G3P) into 3-phospho-D-glyceroyl phosphate. Essential for the maintenance of cellular ATP levels and carbohydrate metabolism. This Taxus baccata (English yew) protein is Glyceraldehyde-3-phosphate dehydrogenase, cytosolic.